A 243-amino-acid chain; its full sequence is MRFCLFSFALIILNCMDYSQCQGNRWRRNKRASYVSNPICKGCLSCSKDNGCSRCQQKLFFFLRREGMRQYGECLHSCPSGYYGHRAPDMNRCARCRIENCDSCFSKDFCTKCKVGFYLHRGRCFDECPDGFAPLDETMECVEGCEVGHWSEWGTCSRNNRTCGFKWGLETRTRQIVKKPAKDTIPCPTIAESRRCKMAMRHCPGGKRTPKAKEKRNKKKRRKLIERAQEQHSVFLATDRVNQ.

The first 23 residues, 1 to 23 (MRFCLFSFALIILNCMDYSQCQG), serve as a signal peptide directing secretion. Intrachain disulfides connect cysteine 40/cysteine 46, cysteine 43/cysteine 52, cysteine 55/cysteine 74, cysteine 78/cysteine 93, cysteine 96/cysteine 104, cysteine 101/cysteine 110, cysteine 113/cysteine 124, cysteine 128/cysteine 141, cysteine 145/cysteine 187, cysteine 156/cysteine 163, and cysteine 196/cysteine 203. The FU repeat unit spans residues 90-134 (MNRCARCRIENCDSCFSKDFCTKCKVGFYLHRGRCFDECPDGFAP). Residues 144-204 (GCEVGHWSEW…RCKMAMRHCP (61 aa)) form the TSP type-1 domain. An N-linked (GlcNAc...) asparagine glycan is attached at asparagine 160. The span at 204 to 224 (PGGKRTPKAKEKRNKKKRRKL) shows a compositional bias: basic residues. The segment at 204–243 (PGGKRTPKAKEKRNKKKRRKLIERAQEQHSVFLATDRVNQ) is disordered.

This sequence belongs to the R-spondin family. Interacts with WNT1. Binds heparin. Interacts with LGR4, LGR5 and LGR6.

It is found in the secreted. Activator of the canonical Wnt signaling pathway by acting as a ligand for LGR4-6 receptors. Upon binding to LGR4-6 (LGR4, LGR5 or LGR6), LGR4-6 associate with phosphorylated LRP6 and frizzled receptors that are activated by extracellular Wnt receptors, triggering the canonical Wnt signaling pathway to increase expression of target genes. Also regulates the canonical Wnt/beta-catenin-dependent pathway and non-canonical Wnt signaling by acting as an inhibitor of ZNRF3, an important regulator of the Wnt signaling pathway. Probably also acts as a ligand for frizzled and LRP receptors. During embryonic development, plays a crucial role in limb specification, amplifying the Wnt signaling pathway independently of LGR4-6 receptors, possibly by acting as a direct antagonistic ligand to RNF43 and ZNRF3, hence governing the number of limbs an embryo should form. This chain is R-spondin-2 (Rspo2), found in Mus musculus (Mouse).